The chain runs to 491 residues: Protein nucleotidyltransferase YdiU (491 aa).

Positions 88, 90, 91, 111, 123, 124, 174, and 181 each coordinate ATP. Aspartate 250 serves as the catalytic Proton acceptor. Residues asparagine 251 and aspartate 260 each coordinate Mg(2+). Aspartate 260 serves as a coordination point for ATP.

The protein belongs to the SELO family. Mg(2+) serves as cofactor. It depends on Mn(2+) as a cofactor.

It catalyses the reaction L-seryl-[protein] + ATP = 3-O-(5'-adenylyl)-L-seryl-[protein] + diphosphate. The enzyme catalyses L-threonyl-[protein] + ATP = 3-O-(5'-adenylyl)-L-threonyl-[protein] + diphosphate. It carries out the reaction L-tyrosyl-[protein] + ATP = O-(5'-adenylyl)-L-tyrosyl-[protein] + diphosphate. The catalysed reaction is L-histidyl-[protein] + UTP = N(tele)-(5'-uridylyl)-L-histidyl-[protein] + diphosphate. It catalyses the reaction L-seryl-[protein] + UTP = O-(5'-uridylyl)-L-seryl-[protein] + diphosphate. The enzyme catalyses L-tyrosyl-[protein] + UTP = O-(5'-uridylyl)-L-tyrosyl-[protein] + diphosphate. Nucleotidyltransferase involved in the post-translational modification of proteins. It can catalyze the addition of adenosine monophosphate (AMP) or uridine monophosphate (UMP) to a protein, resulting in modifications known as AMPylation and UMPylation. The polypeptide is Protein nucleotidyltransferase YdiU (Bradyrhizobium diazoefficiens (strain JCM 10833 / BCRC 13528 / IAM 13628 / NBRC 14792 / USDA 110)).